Here is a 366-residue protein sequence, read N- to C-terminus: Ribosomal RNA large subunit methyltransferase M (366 aa).

S-adenosyl-L-methionine is bound by residues S188, 221 to 224 (CPGG), D240, D260, and D277. The active-site Proton acceptor is the K306.

The protein belongs to the class I-like SAM-binding methyltransferase superfamily. RNA methyltransferase RlmE family. RlmM subfamily. In terms of assembly, monomer.

Its subcellular location is the cytoplasm. The catalysed reaction is cytidine(2498) in 23S rRNA + S-adenosyl-L-methionine = 2'-O-methylcytidine(2498) in 23S rRNA + S-adenosyl-L-homocysteine + H(+). Its function is as follows. Catalyzes the 2'-O-methylation at nucleotide C2498 in 23S rRNA. The chain is Ribosomal RNA large subunit methyltransferase M from Pectobacterium atrosepticum (strain SCRI 1043 / ATCC BAA-672) (Erwinia carotovora subsp. atroseptica).